We begin with the raw amino-acid sequence, 277 residues long: Mitochondrial outer membrane protein porin 5 (277 aa).

This sequence belongs to the eukaryotic mitochondrial porin (TC 1.B.8.1) family.

Its subcellular location is the mitochondrion outer membrane. In terms of biological role, forms a channel through the mitochondrial outer membrane that allows diffusion of small hydrophilic molecules. The channel adopts an open conformation at low or zero membrane potential and a closed conformation at potentials above 30-40 mV. The open state has a weak anion selectivity whereas the closed state is cation-selective. This is Mitochondrial outer membrane protein porin 5 (VDAC5) from Oryza sativa subsp. japonica (Rice).